We begin with the raw amino-acid sequence, 235 residues long: Chaperone protein TorD (235 aa).

This sequence belongs to the TorD/DmsD family. TorD subfamily.

The protein localises to the cytoplasm. Involved in the biogenesis of TorA. Acts on TorA before the insertion of the molybdenum cofactor and, as a result, probably favors a conformation of the apoenzyme that is competent for acquiring the cofactor. This is Chaperone protein TorD from Shewanella amazonensis (strain ATCC BAA-1098 / SB2B).